Here is a 156-residue protein sequence, read N- to C-terminus: Xanthocillin biosynthesis cluster protein D (156 aa).

Residues N107 and N120 are each glycosylated (N-linked (GlcNAc...) asparagine). The helical transmembrane segment at 131-153 threads the bilayer; the sequence is IHLNAIALVATVWYGFTLSSSLL.

The protein localises to the membrane. The protein operates within secondary metabolite biosynthesis. Part of the gene cluster that mediates the biosynthesis of the isocyanide xanthocillin and its derivatives. The first step of the pathway consists in the conversion of tyrosine into a vinyl-isonitrile intermediate by the isocyanide synthase xanB. Subsequent oxidative dimerization of this intermediate to form xanthocillin may involve the cytochrome P450 monooxygenase xanG, whose expression is coregulated with that of XanB. Xanthocillin can be further modified by the isonitrile hydratase-like protein xanA which introduces N-formyl groups and the methyltransferase xanE which introduces methyl groups, leading to the production of several derivatives including fumiformamide. Finally, fumiformamide can be subject to both oxidative and reductive cyclization to yield melanocins E and F, respectively. This Aspergillus fumigatus (strain ATCC MYA-4609 / CBS 101355 / FGSC A1100 / Af293) (Neosartorya fumigata) protein is Xanthocillin biosynthesis cluster protein D.